The primary structure comprises 140 residues: Ig heavy chain V region 93G7 (140 aa).

The signal sequence occupies residues 1 to 19 (MGWSFIFLFLLSVTAGVHS). The Ig-like domain occupies 20–139 (EVQLQQSGAE…WGQGTPLTVS (120 aa)).

The protein is Ig heavy chain V region 93G7 of Mus musculus (Mouse).